Here is a 492-residue protein sequence, read N- to C-terminus: GTPase Obg (492 aa).

Residues 2–159 (PRFVDRVVIH…RELTLELKTV (158 aa)) form the Obg domain. The OBG-type G domain occupies 160–340 (ADVGLIGFPS…LIFGLWQMIS (181 aa)). GTP is bound by residues 166-173 (GFPSAGKS), 191-195 (FTTLV), 212-215 (DVPG), 292-295 (NKID), and 321-323 (STV). Ser173 and Thr193 together coordinate Mg(2+). The region spanning 358–438 (PVPVDDSGFR…IGDMTFDWEP (81 aa)) is the OCT domain. Residues 441-492 (PAGQQVVLSGRGTDARLERTERVGAAERKAARRQRRTGDDAERGTTERGENT) form a disordered region. 2 stretches are compositionally biased toward basic and acidic residues: residues 453–469 (TDAR…AERK) and 476–492 (RTGD…GENT).

It belongs to the TRAFAC class OBG-HflX-like GTPase superfamily. OBG GTPase family. Monomer. Mg(2+) is required as a cofactor.

Its subcellular location is the cytoplasm. In terms of biological role, an essential GTPase which binds GTP, GDP and possibly (p)ppGpp with moderate affinity, with high nucleotide exchange rates and a fairly low GTP hydrolysis rate. Plays a role in control of the cell cycle, stress response, ribosome biogenesis and in those bacteria that undergo differentiation, in morphogenesis control. The protein is GTPase Obg of Mycolicibacterium paratuberculosis (strain ATCC BAA-968 / K-10) (Mycobacterium paratuberculosis).